A 338-amino-acid polypeptide reads, in one-letter code: tRNA N6-adenosine threonylcarbamoyltransferase (338 aa).

Residues histidine 114 and histidine 118 each coordinate Fe cation. Substrate contacts are provided by residues isoleucine 137–glycine 141, aspartate 170, glycine 183, aspartate 187, and asparagine 277. Aspartate 305 is a Fe cation binding site.

The protein belongs to the KAE1 / TsaD family. Fe(2+) is required as a cofactor.

It localises to the cytoplasm. The enzyme catalyses L-threonylcarbamoyladenylate + adenosine(37) in tRNA = N(6)-L-threonylcarbamoyladenosine(37) in tRNA + AMP + H(+). Its function is as follows. Required for the formation of a threonylcarbamoyl group on adenosine at position 37 (t(6)A37) in tRNAs that read codons beginning with adenine. Is involved in the transfer of the threonylcarbamoyl moiety of threonylcarbamoyl-AMP (TC-AMP) to the N6 group of A37, together with TsaE and TsaB. TsaD likely plays a direct catalytic role in this reaction. The protein is tRNA N6-adenosine threonylcarbamoyltransferase of Clostridioides difficile (strain 630) (Peptoclostridium difficile).